We begin with the raw amino-acid sequence, 376 residues long: MPLRPALHLRTGKLRQTPTHNEPDGWAGQPLSAAAAHRGVCPMSDVMTANRRSFLAEDGKETIVRTDDLVRDFDLGHRPEGGRLVLRAVDKVSLTIRRGETLGLVGESGSGKSTIGRMLVGLLPYTSGNIELFGQKIEPRAKAAAWKPLRRRVQFVFQDPHAALNPRMRVGTAIAEPLDVAGNLTRKERSARVDELMELVGLPTSFARRFPHEFSGGQRQRIVIARALALNPEILVCDEAVASLDVSMQAQIVNLLKDLQDQLGLSHLFIAHDLAVVRAVSHRVAVLYAGQIVETGPRTALYSDPLHPYSRALLDSVPRARRGAPRSIIAGEVPSLLNKPKGCAFCPRCPKAMDICRDVPPPLRVIGDREVACHLY.

Residues 1–25 (MPLRPALHLRTGKLRQTPTHNEPDG) are disordered. Residues 64 to 314 (VRTDDLVRDF…PLHPYSRALL (251 aa)) enclose the ABC transporter domain. 106–113 (GESGSGKS) is an ATP binding site.

This sequence belongs to the ABC transporter superfamily. As to quaternary structure, the complex is composed of two ATP-binding proteins (BMEII0205 and BMEII0206), two transmembrane proteins (BMEII0207/BMEII0208 and BMEII0209) and a solute-binding protein (BMEII0210).

It localises to the cell inner membrane. Its function is as follows. Probably part of an ABC transporter complex that could be involved in peptide import. Probably responsible for energy coupling to the transport system. The polypeptide is Putative peptide import ATP-binding protein BMEII0205 (Brucella melitensis biotype 1 (strain ATCC 23456 / CCUG 17765 / NCTC 10094 / 16M)).